The primary structure comprises 83 residues: Short neurotoxin OKI-Ed (83 aa).

The N-terminal stretch at 1–21 (MKTLLLTLVVVTIVCLDLGYT) is a signal peptide. 4 disulfides stabilise this stretch: Cys24–Cys45, Cys38–Cys62, Cys64–Cys75, and Cys76–Cys81.

This sequence belongs to the three-finger toxin family. Short-chain subfamily. Type I alpha-neurotoxin sub-subfamily. As to expression, expressed by the venom gland.

Its subcellular location is the secreted. Its function is as follows. Binds to muscle nicotinic acetylcholine receptor (nAChR) and inhibit acetylcholine from binding to the receptor, thereby impairing neuromuscular transmission. This Laticauda semifasciata (Black-banded sea krait) protein is Short neurotoxin OKI-Ed.